Here is a 216-residue protein sequence, read N- to C-terminus: Large ribosomal subunit protein uL3 (216 aa).

Gln157 bears the N5-methylglutamine mark.

The protein belongs to the universal ribosomal protein uL3 family. As to quaternary structure, part of the 50S ribosomal subunit. Forms a cluster with proteins L14 and L19. In terms of processing, methylated by PrmB.

In terms of biological role, one of the primary rRNA binding proteins, it binds directly near the 3'-end of the 23S rRNA, where it nucleates assembly of the 50S subunit. The protein is Large ribosomal subunit protein uL3 of Xanthomonas campestris pv. campestris (strain 8004).